We begin with the raw amino-acid sequence, 137 residues long: NADH-quinone oxidoreductase subunit A (137 aa).

A run of 3 helical transmembrane segments spans residues 12–32 (WGFAIFLLGVVGLCAFMLGVS), 66–86 (FYLVAMLFVIFDIEALFLFAW), and 96–116 (TGFVEALVFIAILLAGLVYLF).

Belongs to the complex I subunit 3 family. In terms of assembly, NDH-1 is composed of 13 different subunits. Subunits NuoA, H, J, K, L, M, N constitute the membrane sector of the complex.

It is found in the cell inner membrane. The enzyme catalyses a quinone + NADH + 5 H(+)(in) = a quinol + NAD(+) + 4 H(+)(out). In terms of biological role, NDH-1 shuttles electrons from NADH, via FMN and iron-sulfur (Fe-S) centers, to quinones in the respiratory chain. The immediate electron acceptor for the enzyme in this species is believed to be ubiquinone. Couples the redox reaction to proton translocation (for every two electrons transferred, four hydrogen ions are translocated across the cytoplasmic membrane), and thus conserves the redox energy in a proton gradient. The protein is NADH-quinone oxidoreductase subunit A of Pseudomonas fluorescens (strain Pf0-1).